The following is a 255-amino-acid chain: Post-GPI attachment to proteins factor 2 (255 aa).

The next 6 helical transmembrane spans lie at 25–45 (LAAL…SLLF), 80–100 (LAIF…LEYY), 111–131 (LGIL…CLSF), 143–163 (NAFV…YLLN), 185–205 (LFLV…RHNA), and 209–229 (AGVY…NMGF).

It belongs to the PGAP2 family.

Its subcellular location is the golgi apparatus membrane. It localises to the endoplasmic reticulum membrane. Involved in the lipid remodeling steps of GPI-anchor maturation. Required for stable expression of GPI-anchored proteins at the cell surface. The sequence is that of Post-GPI attachment to proteins factor 2 from Drosophila pseudoobscura pseudoobscura (Fruit fly).